The chain runs to 506 residues: Maturase K (506 aa).

Belongs to the intron maturase 2 family. MatK subfamily.

It is found in the plastid. It localises to the chloroplast. In terms of biological role, usually encoded in the trnK tRNA gene intron. Probably assists in splicing its own and other chloroplast group II introns. This Arabis alpina (Alpine rock-cress) protein is Maturase K.